The chain runs to 811 residues: MAASGWGRGCDILIFYSPDAEEWCQYLQDLFVSCRQVRSQKTQTYRLVPDASFSAQDLWVFRDARCVLVLLSAGLVGCFGQPGLLPMLQRACHPPQRVVRLLCGVQPGDEDFQAFFPDWAHWQEMTCDDEPETYLAAVRKAISEDSGCDSVTDTEPEDERELPFSKQTNLPPEISPGNLMVVQPDRIRCGAETTVYIIVRCKLDEKVSTEAEFSPEDSPSIRVEGTLENEYTVSVKAPDLSSGNVSLKVYSGDLVVCETTVSYYTDMEEIGNLLSSAANPVEFMCQAFKIVPYNTETLDKLLTESLKNNIPASGLHLFGINQLEEDDMMTNQRDEELPTLLHFAAKYGLKNLTALLLTCPGALQAYSVANKHGHYPNTIAEKHGFRDLRQFIDEYVETVDMLKTHIKEELMQGEEADDVYESMAHLSTDLLMKCSLNPGCDDELYESMAAFAPAATEDLYVEMLQASAGNPVSGESFSRPTKDSMIRKFLEGNSVKPASWEREQHHPYGEELYHIVDEDETFSVDLANRPPVPVPRPEASAPGPPPPPDNEPYISKVFAEKSQERLGNFYVSSESIRKEPLVRPWRDRPPSSIYDPFAGMKTPGQRQLITLQEQVKLGIVNVDEAVLHFKEWQLNQKKRSESFRFQQENLKRLRESITRRRKEKPKSGKHTDLEITVPIRHSQHLPEKVEFGVYESGPRKSVLPARTELRRGDWKTDSMSSTASSTSNRSSTRSLLSVSSGMEGDNEDNEIPEITRSRGPGPTQVDGAPVVTGTPVGTLERPPRVPPRAASQRPLTRESFHPPPPVPPRGR.

Positions 8–146 (RGCDILIFYS…AVRKAISEDS (139 aa)) constitute a TIR domain. A necessary and sufficient to mediate inhibition of NF-kappa-B downstream of activated TLRs; may mediate interaction with MYD88 and TIRAP region spans residues 10–145 (CDILIFYSPD…AAVRKAISED (136 aa)). The disordered stretch occupies residues 146–169 (SGCDSVTDTEPEDERELPFSKQTN). In terms of domain architecture, DBB spans 182 to 318 (VQPDRIRCGA…NIPASGLHLF (137 aa)). Y264 is modified (phosphotyrosine). A phosphotyrosine; by SYK mark is found at Y420, Y445, and Y460. Y513 bears the Phosphotyrosine; by ABL1 mark. The interval 525-551 (DLANRPPVPVPRPEASAPGPPPPPDNE) is disordered. The span at 530 to 550 (PPVPVPRPEASAPGPPPPPDN) shows a compositional bias: pro residues. A phosphotyrosine; by ABL1 mark is found at Y553, Y570, and Y594. At S642 the chain carries Phosphoserine. Y694 is modified (phosphotyrosine; by ABL1). A disordered region spans residues 702–811 (VLPARTELRR…PPPPVPPRGR (110 aa)). A compositionally biased stretch (basic and acidic residues) spans 707-716 (TELRRGDWKT). A compositionally biased stretch (low complexity) spans 717–740 (DSMSSTASSTSNRSSTRSLLSVSS). S718 carries the phosphoserine modification. Over residues 801–811 (HPPPPVPPRGR) the composition is skewed to pro residues.

In terms of assembly, homooligomer. Interacts (phosphorylated on tyrosine residues within YXXM motifs) with PIK3R1 (via SH2 domain); required for BCR- and TLR-mediated activation of phosphoinositide 3-kinase. Interacts (via polyproline C-terminal region) with ABI1 (via SH3 domain); the interaction promotes phosphorylation of PIK3AP1 by ABL1. May interact with MYD88 and TIRAP. Post-translationally, constitutively phosphorylated. Phosphorylated on tyrosine residues in C-terminal region by ABL1. Phosphorylated on tyrosine residues within the YXXM motifs by BTK and SYK. Isoform 1 and isoform 2 are phosphorylated on tyrosine residues, most likely within the YXXM motifs, via CD19 activation. Toll-like receptor activation induces appearance of a phosphorylated form associated with membranes. In terms of tissue distribution, predominantly expressed in spleen (at protein level). Expressed at lower levels in thymus, liver and lung. Expressed in B-cells, macrophages and natural killer (NK) cells.

It localises to the cytoplasm. The protein resides in the cell membrane. In terms of biological role, signaling adapter that contributes to B-cell development by linking B-cell receptor (BCR) signaling to the phosphoinositide 3-kinase (PI3K)-Akt signaling pathway. Has a complementary role to the BCR coreceptor CD19, coupling BCR and PI3K activation by providing a docking site for the PI3K subunit PIK3R1. Alternatively, links Toll-like receptor (TLR) signaling to PI3K activation, a process preventing excessive inflammatory cytokine production. Also involved in the activation of PI3K in natural killer cells. May be involved in the survival of mature B-cells via activation of REL. The chain is Phosphoinositide 3-kinase adapter protein 1 (Pik3ap1) from Mus musculus (Mouse).